The primary structure comprises 161 residues: Ribosome maturation factor RimP (161 aa).

The protein belongs to the RimP family.

The protein resides in the cytoplasm. Required for maturation of 30S ribosomal subunits. This chain is Ribosome maturation factor RimP, found in Herminiimonas arsenicoxydans.